Reading from the N-terminus, the 98-residue chain is Molybdopterin synthase sulfur carrier subunit (98 aa).

Glycine 98 carries the post-translational modification 1-thioglycine; alternate. Glycine 98 carries the glycyl adenylate; alternate modification.

This sequence belongs to the MoaD family. MOCS2A subfamily. In terms of assembly, heterotetramer; composed of 2 small (MOCS2A) and 2 large (MOCS2B) subunits. Post-translationally, C-terminal thiocarboxylation occurs in 2 steps, it is first acyl-adenylated (-COAMP) via the hesA/moeB/thiF part of MOCS3, then thiocarboxylated (-COSH) via the rhodanese domain of MOCS3.

The protein resides in the cytoplasm. It functions in the pathway cofactor biosynthesis; molybdopterin biosynthesis. Its function is as follows. Acts as a sulfur carrier required for molybdopterin biosynthesis. Component of the molybdopterin synthase complex that catalyzes the conversion of precursor Z into molybdopterin by mediating the incorporation of 2 sulfur atoms into precursor Z to generate a dithiolene group. In the complex, serves as sulfur donor by being thiocarboxylated (-COSH) at its C-terminus by MOCS3. After interaction with MOCS2B, the sulfur is then transferred to precursor Z to form molybdopterin. The sequence is that of Molybdopterin synthase sulfur carrier subunit from Aedes aegypti (Yellowfever mosquito).